The sequence spans 280 residues: MPAQILDGKKIAAEVRAEVKEEVSRLKAEGINPGLAVVLVGEDPASQVYVRNKHRACEEVGIYSEVHRLPAATSQAELLKLIDQLNKDPKIHGILVQLPLPDHIDEKKVIDAIALEKDVDGFSPANVGNLVIGDKCFYPCTPHGCMVLLEKAGIDPKGKKAVVVGRSNIVGKPVAMMLLARHATVTICHSRTRDLAAECRQADILIAAVGKPELITGDMIKEGAVVIDVGINRVGEKKLVGDVHFESAAQKAGWITPVPGGVGPMTIAMLLKNTVEAARR.

Residues 165 to 167, S190, and I231 each bind NADP(+); that span reads GRS.

Belongs to the tetrahydrofolate dehydrogenase/cyclohydrolase family. As to quaternary structure, homodimer.

The enzyme catalyses (6R)-5,10-methylene-5,6,7,8-tetrahydrofolate + NADP(+) = (6R)-5,10-methenyltetrahydrofolate + NADPH. It catalyses the reaction (6R)-5,10-methenyltetrahydrofolate + H2O = (6R)-10-formyltetrahydrofolate + H(+). Its pathway is one-carbon metabolism; tetrahydrofolate interconversion. Catalyzes the oxidation of 5,10-methylenetetrahydrofolate to 5,10-methenyltetrahydrofolate and then the hydrolysis of 5,10-methenyltetrahydrofolate to 10-formyltetrahydrofolate. The protein is Bifunctional protein FolD of Moorella thermoacetica (strain ATCC 39073 / JCM 9320).